Consider the following 703-residue polypeptide: Lethal(3)malignant brain tumor-like protein 2 (703 aa).

Residues 1–85 (MEKPRGTEEA…NNRSLDGSGS (85 aa)) form a disordered region. At Ser13 the chain carries Phosphoserine. The span at 15–25 (PMEEEEEDDLD) shows a compositional bias: acidic residues. The span at 35-49 (SYNSSAGSESSSYLE) shows a compositional bias: low complexity. Residues 50–60 (ESSEAENEDRE) show a composition bias toward acidic residues. At Ser67 the chain carries Phosphoserine. Over residues 73 to 82 (SSANNRSLDG) the composition is skewed to polar residues. An FCS-type zinc finger spans residues 81–116 (DGSGSEPAVCEMCGIVGTREAFFSKTKRFCSVSCSR). Residues Cys90, Cys93, Cys110, and Cys114 each coordinate Zn(2+). 4 MBT repeats span residues 179-283 (FDWG…LVPP), 291-391 (TDWK…IKMS), 397-500 (MSHH…LTPP), and 508-604 (FAWE…LQPP). Residue Ser338 is modified to Phosphoserine. Lys405 participates in a covalent cross-link: Glycyl lysine isopeptide (Lys-Gly) (interchain with G-Cter in SUMO2). Positions 604 to 649 (PVSAEPNTPQKGKDTTKKKKKQFGKKRKRIPSAKTRPLRQGSKKPL) are disordered. The span at 619–634 (TKKKKKQFGKKRKRIP) shows a compositional bias: basic residues. Residues Lys647 and Lys673 each participate in a glycyl lysine isopeptide (Lys-Gly) (interchain with G-Cter in SUMO2) cross-link. A disordered region spans residues 675 to 703 (EHQDISSLDRSPSPQLPLPIESIKQERNN). Phosphoserine occurs at positions 681, 685, and 687. Lys698 is covalently cross-linked (Glycyl lysine isopeptide (Lys-Gly) (interchain with G-Cter in SUMO1); alternate). Residue Lys698 forms a Glycyl lysine isopeptide (Lys-Gly) (interchain with G-Cter in SUMO2); alternate linkage.

Part of the E2F6.com-1 complex in G0 phase composed of E2F6, MGA, MAX, TFDP1, CBX3, BAT8, EUHMTASE1, RING1, RNF2, MBLR, BAT8 and YAF2. In terms of processing, phosphorylated. In terms of tissue distribution, ubiquitous.

The protein resides in the nucleus. Its function is as follows. Putative Polycomb group (PcG) protein. PcG proteins maintain the transcriptionally repressive state of genes, probably via a modification of chromatin, rendering it heritably changed in its expressibility. Its association with a chromatin-remodeling complex suggests that it may contribute to prevent expression of genes that trigger the cell into mitosis. Binds to monomethylated and dimethylated 'Lys-20' on histone H4. Binds histone H3 peptides that are monomethylated or dimethylated on 'Lys-4', 'Lys-9' or 'Lys-27'. The polypeptide is Lethal(3)malignant brain tumor-like protein 2 (L3mbtl2) (Mus musculus (Mouse)).